A 123-amino-acid chain; its full sequence is Large ribosomal subunit protein uL29 (123 aa).

Belongs to the universal ribosomal protein uL29 family. In terms of assembly, component of the large ribosomal subunit.

It localises to the cytoplasm. In terms of biological role, component of the large ribosomal subunit. The ribosome is a large ribonucleoprotein complex responsible for the synthesis of proteins in the cell. This is Large ribosomal subunit protein uL29 (rpl35) from Hippocampus comes (Tiger tail seahorse).